Reading from the N-terminus, the 336-residue chain is Fructose-1,6-bisphosphatase class 1 (336 aa).

The Mg(2+) site is built by Glu90, Asp112, Leu114, and Asp115. Substrate is bound by residues 115–118 (DGSS), Asn207, and Lys273. Glu279 is a Mg(2+) binding site.

This sequence belongs to the FBPase class 1 family. In terms of assembly, homotetramer. Mg(2+) serves as cofactor.

It is found in the cytoplasm. It catalyses the reaction beta-D-fructose 1,6-bisphosphate + H2O = beta-D-fructose 6-phosphate + phosphate. It participates in carbohydrate biosynthesis; gluconeogenesis. The polypeptide is Fructose-1,6-bisphosphatase class 1 (Xanthomonas axonopodis pv. citri (strain 306)).